We begin with the raw amino-acid sequence, 481 residues long: MPDSGSLGPPTSLPEQPPAPPATAPDAPAATVTDRPVTSSVAHFLAGLHPPVTRPSSPPSPSMPPASSNPSSPPSSSMPPASWAPPSPLSPPAPSLPPTSPPATAPETSAATGSDSVVRRVPVGPTGLGTTALSLARRQAAVPPDAVPAPSGPSAEGPVVPGLYHHPIPEPDPVRVAEVSRRIKRWAEDEVRLYPEEWEGQFDGFSVGRYMVACHPDAPTVDHLMLATRLMVAENAVDDCYCEDHGGSPVGLGGRLLLAHTALDHLHTTAEYAPEWSESLGSDAPRRAYRSAMDHFVRAATPSQADRYRHDMARLHLGYLAEAAWAETGHVPEVCEYLAMRQFNNFRPCPTITDTVGGYELPADLHARPDMQRVIALAGNATTIVNDLYSYTKELDSPGRHLNLPVVIAEREHLSDRDAYLKAVEVHNELMHAFEAAAAELAADCPVPAVLRFLRGVAAWVDGNHDWHRTNTYRYSLPDFW.

Disordered stretches follow at residues 1–125 (MPDS…PVGP) and 139–160 (QAAVPPDAVPAPSGPSAEGPVV). The segment covering 11–23 (TSLPEQPPAPPAT) has biased composition (pro residues). Positions 24–33 (APDAPAATVT) are enriched in low complexity. Composition is skewed to pro residues over residues 52 to 64 (VTRPSSPPSPSMP) and 71 to 104 (SSPPSSSMPPASWAPPSPLSPPAPSLPPTSPPAT). The segment covering 105 to 114 (APETSAATGS) has biased composition (low complexity). 6 residues coordinate Mg(2+): Asp-238, Asp-239, Glu-243, Asn-386, Ser-390, and Glu-394.

This sequence belongs to the terpene synthase family. 2-methylisoborneol synthase subfamily. It depends on Mg(2+) as a cofactor.

The catalysed reaction is (E)-2-methylgeranyl diphosphate + H2O = 2-methylisoborneol + diphosphate. Functionally, catalyzes the cyclization of 2-methylgeranyl diphosphate (2-MeGPP) to 2-methylisoborneol (2-MIB), which likely involves the intermediacy of 2-methyllinalyl diphosphate. This Streptomyces lasalocidi (Streptomyces lasaliensis) protein is 2-methylisoborneol synthase (tpc).